The sequence spans 105 residues: Protamine-2 (105 aa).

The segment at 1 to 74 (MVRYRMRSPS…RRSCRRRRRH (74 aa)) is disordered. A phosphoserine mark is found at Ser8, Ser10, and Ser33. Residues 33 to 42 (SPERVEDYGR) show a composition bias toward basic and acidic residues. Residues 43-74 (THRGHHRHRRCSRKRLHRIHKRRRSCRRRRRH) are compositionally biased toward basic residues.

This sequence belongs to the protamine P2 family. As to quaternary structure, interacts with TDRP. Proteolytic processing into mature chains is required for histone eviction during spermatogenesis. Transition proteins (TNP1 and TNP2) are required for processing. In terms of tissue distribution, testis.

It localises to the nucleus. The protein localises to the chromosome. Protamines substitute for histones in the chromatin of sperm during the haploid phase of spermatogenesis. They compact sperm DNA into a highly condensed, stable and inactive complex. The chain is Protamine-2 (Prm2) from Rattus fuscipes (Bush rat).